The chain runs to 196 residues: MKIFAVLSAFLMPFVVPNTTVNGYKDLRFGMTIEQAKETKLCEDQWHLPADDDWRRVVRGYWVCDKFRFDDGYAVARLRFIGGQLKSIELKMPEYPKYPAELLLHVLEEKYGKTIEVEQRDLIEEDILQGKIRKRRKNESALLDTYQFAKGTVSLTLLTYNGIPQPAEIIYSAPELLLLEKKLEDRPQRRTLLRDL.

This is an uncharacterized protein from Pasteurella multocida (strain Pm70).